We begin with the raw amino-acid sequence, 156 residues long: Putative pre-16S rRNA nuclease (156 aa).

This sequence belongs to the YqgF nuclease family.

Its subcellular location is the cytoplasm. Functionally, could be a nuclease involved in processing of the 5'-end of pre-16S rRNA. The sequence is that of Putative pre-16S rRNA nuclease from Phenylobacterium zucineum (strain HLK1).